Consider the following 218-residue polypeptide: Outer-membrane lipoprotein LolB (218 aa).

The first 20 residues, 1–20 (MSQVIRTLALTGLALAGLSG), serve as a signal peptide directing secretion. Residue Cys21 is the site of N-palmitoyl cysteine attachment. Residue Cys21 is the site of S-diacylglycerol cysteine attachment.

It belongs to the LolB family. Monomer.

Its subcellular location is the cell outer membrane. Functionally, plays a critical role in the incorporation of lipoproteins in the outer membrane after they are released by the LolA protein. The polypeptide is Outer-membrane lipoprotein LolB (Xanthomonas campestris pv. campestris (strain B100)).